The chain runs to 347 residues: Ribosomal RNA small subunit methyltransferase C (347 aa).

Belongs to the methyltransferase superfamily. RsmC family. Monomer.

The protein localises to the cytoplasm. The enzyme catalyses guanosine(1207) in 16S rRNA + S-adenosyl-L-methionine = N(2)-methylguanosine(1207) in 16S rRNA + S-adenosyl-L-homocysteine + H(+). In terms of biological role, specifically methylates the guanine in position 1207 of 16S rRNA in the 30S particle. The sequence is that of Ribosomal RNA small subunit methyltransferase C from Serratia proteamaculans (strain 568).